Here is a 451-residue protein sequence, read N- to C-terminus: Exodeoxyribonuclease 7 large subunit (451 aa).

It belongs to the XseA family. As to quaternary structure, heterooligomer composed of large and small subunits.

The protein localises to the cytoplasm. It catalyses the reaction Exonucleolytic cleavage in either 5'- to 3'- or 3'- to 5'-direction to yield nucleoside 5'-phosphates.. Functionally, bidirectionally degrades single-stranded DNA into large acid-insoluble oligonucleotides, which are then degraded further into small acid-soluble oligonucleotides. The sequence is that of Exodeoxyribonuclease 7 large subunit from Neisseria gonorrhoeae (strain ATCC 700825 / FA 1090).